A 328-amino-acid chain; its full sequence is D-cysteine desulfhydrase (328 aa).

Lys51 carries the post-translational modification N6-(pyridoxal phosphate)lysine.

The protein belongs to the ACC deaminase/D-cysteine desulfhydrase family. Homodimer. Pyridoxal 5'-phosphate is required as a cofactor.

It carries out the reaction D-cysteine + H2O = hydrogen sulfide + pyruvate + NH4(+) + H(+). Functionally, catalyzes the alpha,beta-elimination reaction of D-cysteine and of several D-cysteine derivatives. It could be a defense mechanism against D-cysteine. The sequence is that of D-cysteine desulfhydrase from Shigella sonnei (strain Ss046).